Here is a 252-residue protein sequence, read N- to C-terminus: Acyl-coenzyme A diphosphatase FITM2 (252 aa).

Residues 1–25 (MAAAVAGSLVDKLVCLWRQPYTRIY) lie on the Cytoplasmic side of the membrane. The chain crosses the membrane as a helical span at residues 26 to 46 (LPHLFFCISLVGSVLKNAELV). The Lumenal portion of the chain corresponds to 47 to 59 (PESYFSSSRNVLN). The chain crosses the membrane as a helical span at residues 60-80 (LYFVKVSWGWTIVLLLPFIAY). Over 81–94 (SNFYIKSHMFALRR) the chain is Cytoplasmic. A helical membrane pass occupies residues 95-115 (LTSLLVATLVWYICTETFFYI). At 116–156 (EDITGSCYESNTMVVIRGEFDTKAACRKAGFFWDGFDISGH) the chain is on the lumenal side. The active site involves H156. A helical transmembrane segment spans residues 157–177 (SFILSYSSLVIMEEMVPMLHI). Residues 178-190 (QPAYRNPPLDCLY) lie on the Cytoplasmic side of the membrane. Residues 191-211 (LALNVIVAIWIWMFGCTSVYF) traverse the membrane as a helical segment. H212 is an active-site residue. The Lumenal segment spans residues 212–223 (HDIIDKILGTSC). The helical transmembrane segment at 224 to 244 (GILGWYMTYKVWYVKLFSPGL) threads the bilayer. At 245–252 (PPQPKQHT) the chain is on the cytoplasmic side.

This sequence belongs to the FIT family. FIT2 subfamily. In terms of tissue distribution, widely expressed.

It localises to the endoplasmic reticulum membrane. The enzyme catalyses an acyl-CoA + H2O = an acyl-4'-phosphopantetheine + adenosine 3',5'-bisphosphate + 2 H(+). Functionally, fatty acyl-coenzyme A (CoA) diphosphatase that hydrolyzes fatty acyl-CoA to yield acyl-4'-phosphopantetheine and adenosine 3',5'-bisphosphate. Preferentially hydrolyzes unsaturated long-chain acyl-CoA substrates in the endoplasmic reticulum (ER) lumen. This catalytic activity is required for maintaining ER structure and for lipid droplets (LDs) biogenesis, which are lipid storage organelles involved in maintaining lipid and energy homeostasis. Required for lipid droplet accumulation in liver and intestine during embryogenesis. May directly bind to diacylglycerol (DAGs) and triacylglycerol, which is also important for LD biogenesis. May support directional budding of nacent LDs from the ER into the cytosol by reducing DAG levels at sites of LD formation. May play a role in the regulation of cell morphology, ER morphology and cytoskeletal organization. This chain is Acyl-coenzyme A diphosphatase FITM2, found in Danio rerio (Zebrafish).